The chain runs to 285 residues: Meiotically up-regulated gene 125 protein (285 aa).

It localises to the cytoplasm. The protein localises to the nucleus. Has a role in meiosis. The chain is Meiotically up-regulated gene 125 protein (mug125) from Schizosaccharomyces pombe (strain 972 / ATCC 24843) (Fission yeast).